Reading from the N-terminus, the 1546-residue chain is DNA-directed RNA polymerase subunit beta' (1546 aa).

Cys-57, Cys-59, Cys-72, and Cys-75 together coordinate Zn(2+). The Mg(2+) site is built by Asp-756, Asp-758, and Asp-760. Zn(2+) is bound by residues Cys-1130, Cys-1211, Cys-1218, and Cys-1221. The interval 1512–1546 (LEKYGEGSTSSDAVTGGQRYDDTRPGSSINPGYGD) is disordered. The segment covering 1536-1546 (PGSSINPGYGD) has biased composition (polar residues).

Belongs to the RNA polymerase beta' chain family. The RNAP catalytic core consists of 2 alpha, 1 beta, 1 beta' and 1 omega subunit. When a sigma factor is associated with the core the holoenzyme is formed, which can initiate transcription. Mg(2+) is required as a cofactor. Requires Zn(2+) as cofactor.

It catalyses the reaction RNA(n) + a ribonucleoside 5'-triphosphate = RNA(n+1) + diphosphate. In terms of biological role, DNA-dependent RNA polymerase catalyzes the transcription of DNA into RNA using the four ribonucleoside triphosphates as substrates. This is DNA-directed RNA polymerase subunit beta' from Deinococcus radiodurans (strain ATCC 13939 / DSM 20539 / JCM 16871 / CCUG 27074 / LMG 4051 / NBRC 15346 / NCIMB 9279 / VKM B-1422 / R1).